The primary structure comprises 277 residues: Proteasome subunit beta type-7 (277 aa).

A propeptide spans 1–43 (MAAVSVFQAPVGGFSFDNCRRNAVLEADFAKKGFKLPKARKTG) (removed in mature form). Residue Thr44 is the Nucleophile of the active site.

The protein belongs to the peptidase T1B family. As to quaternary structure, the 26S proteasome consists of a 20S proteasome core and two 19S regulatory subunits. The 20S proteasome core is a barrel-shaped complex made of 28 subunits that are arranged in four stacked rings. The two outer rings are each formed by seven alpha subunits, and the two inner rings are formed by seven beta subunits. The proteolytic activity is exerted by three beta-subunits PSMB5, PSMB6 and PSMB7.

It localises to the cytoplasm. The protein resides in the nucleus. The catalysed reaction is Cleavage of peptide bonds with very broad specificity.. Its function is as follows. Component of the 20S core proteasome complex involved in the proteolytic degradation of most intracellular proteins. This complex plays numerous essential roles within the cell by associating with different regulatory particles. Associated with two 19S regulatory particles, forms the 26S proteasome and thus participates in the ATP-dependent degradation of ubiquitinated proteins. The 26S proteasome plays a key role in the maintenance of protein homeostasis by removing misfolded or damaged proteins that could impair cellular functions, and by removing proteins whose functions are no longer required. Associated with the PA200 or PA28, the 20S proteasome mediates ubiquitin-independent protein degradation. This type of proteolysis is required in several pathways including spermatogenesis (20S-PA200 complex) or generation of a subset of MHC class I-presented antigenic peptides (20S-PA28 complex). Within the 20S core complex, PSMB7 displays a trypsin-like activity. The sequence is that of Proteasome subunit beta type-7 (Psmb7) from Rattus norvegicus (Rat).